Here is a 409-residue protein sequence, read N- to C-terminus: Nucleoprotein (409 aa).

4 disordered regions span residues 1–32, 46–84, 121–194, and 238–259; these read MASG…SSGN, SPQP…KGRR, ADVK…GSED, and VDQV…DKMN. The RNA-binding stretch occupies residues 29 to 160; sequence SSGNASWFQA…GNFRWDFIPL (132 aa). One can recognise a CoV N NTD domain in the interval 31–156; it reads GNASWFQAIK…GGPDGNFRWD (126 aa). The span at 70 to 84 shows a compositional bias: basic residues; the sequence is YWRRQARFKPGKGRR. Residues 162–179 show a composition bias toward low complexity; sequence RGRSGRSTAASSAASSRP. Basic and acidic residues-rich tracts occupy residues 180-192 and 247-259; these read PSRE…RSGS and KGKE…DKMN. A phosphoserine; by host mark is found at Ser190 and Ser192. The 117-residue stretch at 215–331 folds into the CoV N CTD domain; it reads TKAKADEMAH…QCVDGVGTRP (117 aa). Positions 226–333 are dimerization; that stretch reads RYCKRTIPPG…VDGVGTRPKD (108 aa). Residues Cys320 and Cys323 are joined by a disulfide bond. Residues 326 to 409 are disordered; that stretch reads GVGTRPKDDE…GDSALGENEL (84 aa). Residues 341 to 356 are compositionally biased toward low complexity; that stretch reads RSSSRPATRTSSPAPR. The segment covering 358–367 has biased composition (basic residues); sequence QRLKKEKRPK. Positions 368 to 384 are enriched in basic and acidic residues; it reads KQDDEVDKALTSDEERN. Thr378 is subject to Phosphothreonine; by host. Position 379 is a phosphoserine; by host (Ser379).

It belongs to the gammacoronavirus nucleocapsid protein family. As to quaternary structure, homooligomer. Both monomeric and oligomeric forms interact with RNA. Interacts with protein M. Interacts with NSP3; this interaction serves to tether the genome to the newly translated replicase-transcriptase complex at a very early stage of infection. ADP-ribosylated. The ADP-ribosylation is retained in the virion during infection. Post-translationally, phosphorylated on serine and threonine residues.

Its subcellular location is the virion. The protein resides in the host endoplasmic reticulum-Golgi intermediate compartment. The protein localises to the host Golgi apparatus. In terms of biological role, packages the positive strand viral genome RNA into a helical ribonucleocapsid (RNP) and plays a fundamental role during virion assembly through its interactions with the viral genome and membrane protein M. Plays an important role in enhancing the efficiency of subgenomic viral RNA transcription as well as viral replication. This is Nucleoprotein from Avian infectious bronchitis virus (strain Gray) (IBV).